The following is a 407-amino-acid chain: Methylenetetrahydrofolate--tRNA-(uracil-5-)-methyltransferase TrmFO (407 aa).

G9–G14 lines the FAD pocket.

The protein belongs to the MnmG family. TrmFO subfamily. FAD serves as cofactor.

It localises to the cytoplasm. It carries out the reaction uridine(54) in tRNA + (6R)-5,10-methylene-5,6,7,8-tetrahydrofolate + NADH + H(+) = 5-methyluridine(54) in tRNA + (6S)-5,6,7,8-tetrahydrofolate + NAD(+). It catalyses the reaction uridine(54) in tRNA + (6R)-5,10-methylene-5,6,7,8-tetrahydrofolate + NADPH + H(+) = 5-methyluridine(54) in tRNA + (6S)-5,6,7,8-tetrahydrofolate + NADP(+). Functionally, catalyzes the folate-dependent formation of 5-methyl-uridine at position 54 (M-5-U54) in all tRNAs. The polypeptide is Methylenetetrahydrofolate--tRNA-(uracil-5-)-methyltransferase TrmFO (Lactobacillus helveticus (strain DPC 4571)).